We begin with the raw amino-acid sequence, 264 residues long: Thiazole synthase (264 aa).

Lysine 106 (schiff-base intermediate with DXP) is an active-site residue. 1-deoxy-D-xylulose 5-phosphate contacts are provided by residues glycine 167, 193 to 194 (AG), and 215 to 216 (NS).

Belongs to the ThiG family. Homotetramer. Forms heterodimers with either ThiH or ThiS.

Its subcellular location is the cytoplasm. The catalysed reaction is [ThiS sulfur-carrier protein]-C-terminal-Gly-aminoethanethioate + 2-iminoacetate + 1-deoxy-D-xylulose 5-phosphate = [ThiS sulfur-carrier protein]-C-terminal Gly-Gly + 2-[(2R,5Z)-2-carboxy-4-methylthiazol-5(2H)-ylidene]ethyl phosphate + 2 H2O + H(+). It functions in the pathway cofactor biosynthesis; thiamine diphosphate biosynthesis. Functionally, catalyzes the rearrangement of 1-deoxy-D-xylulose 5-phosphate (DXP) to produce the thiazole phosphate moiety of thiamine. Sulfur is provided by the thiocarboxylate moiety of the carrier protein ThiS. In vitro, sulfur can be provided by H(2)S. This Prochlorococcus marinus (strain AS9601) protein is Thiazole synthase.